The chain runs to 372 residues: Glutamate 5-kinase (372 aa).

Lys-14 provides a ligand contact to ATP. Residues Ser-54, Asp-141, and Asn-153 each coordinate substrate. ATP is bound by residues 173-174 and 215-221; these read TD and TGGMATK. A PUA domain is found at 280–358; that stretch reads KGKLVLDVGA…DEIESLLGYD (79 aa).

It belongs to the glutamate 5-kinase family.

It is found in the cytoplasm. It carries out the reaction L-glutamate + ATP = L-glutamyl 5-phosphate + ADP. It functions in the pathway amino-acid biosynthesis; L-proline biosynthesis; L-glutamate 5-semialdehyde from L-glutamate: step 1/2. Functionally, catalyzes the transfer of a phosphate group to glutamate to form L-glutamate 5-phosphate. This chain is Glutamate 5-kinase, found in Shewanella woodyi (strain ATCC 51908 / MS32).